The chain runs to 601 residues: Sodium-dependent phosphate transport protein 2C (601 aa).

At 1-75 (MPNSLAGGQV…RRVVSSFLKA (75 aa)) the chain is on the cytoplasmic side. Ser4 carries the post-translational modification Phosphoserine. The chain crosses the membrane as a helical span at residues 76–96 (CGLLGSLYFFICSLDILSSAF). Residues 97–110 (QLLGSKMAGDIFKD) lie on the Extracellular side of the membrane. The helical transmembrane segment at 111-131 (NVVLSNPVAGLVIGVLVTVLV) threads the bilayer. Topologically, residues 132 to 187 (QSSSTSSSIVVSMVASKLLTVQVSVPIIMGVNVGTSITSTLVSMAQSGDRDEFQRA) are cytoplasmic. The chain crosses the membrane as a helical span at residues 188–208 (FSGSAVHGIFNWLTVLVLLPL). At 209-324 (ESATAALERL…FAGSKLTDLA (116 aa)) the chain is on the extracellular side. 3 N-linked (GlcNAc...) asparagine glycosylation sites follow: Asn264, Asn267, and Asn299. Residues Cys275 and Cys311 are joined by a disulfide bond. Residues 325–345 (VGFILLAGSLLVLCVCLVLIV) form a helical membrane-spanning segment. Topologically, residues 346–369 (KLLNSVLKGRIAQAVKTVINADFP) are cytoplasmic. The helical transmembrane segment at 370-390 (FPFGWLSGYLAILVGAGLTFL) threads the bilayer. Topologically, residues 391–441 (LQSSSVFTAAIVPLMGVGVIDLERAYPLFLGSNIGTTTTALLAALASPADM) are extracellular. A helical membrane pass occupies residues 442–462 (LIFAVQVALIHFFFNLAGILL). The Cytoplasmic portion of the chain corresponds to 463-487 (WYLVPVLRLPIPLAKRFGNLTAQYR). The chain crosses the membrane as a helical span at residues 488–508 (WVAIVYLLLTFLLLPLAAFGL). The Extracellular portion of the chain corresponds to 509 to 512 (SLAG). The helical transmembrane segment at 513–533 (GTVLAAVGGPLVGLVLLIILV) threads the bilayer. Residues 534 to 601 (NVLQQHRPSW…NPQVIASQQL (68 aa)) lie on the Cytoplasmic side of the membrane.

This sequence belongs to the SLC34A transporter family. Expressed only in the kidney.

The protein resides in the apical cell membrane. It carries out the reaction 2 Na(+)(out) + phosphate(out) = 2 Na(+)(in) + phosphate(in). Involved in actively transporting phosphate into cells via Na(+) cotransport in the renal brush border membrane. The cotransport has a Na(+):Pi stoichiometry of 2:1 and is electroneutral. The polypeptide is Sodium-dependent phosphate transport protein 2C (Slc34a3) (Mus musculus (Mouse)).